Reading from the N-terminus, the 139-residue chain is Drosulfakinins (139 aa).

The first 35 residues, 1-35 (MGHRGMGCAHFATMAMPLWALTFYLLVVLPVPSQT), serve as a signal peptide directing secretion. Positions 36-71 (ASVEVGKEERRLQDLDPKMGSEAGNTDGLSLARFGS) are excised as a propeptide. Position 80 is a phenylalanine amide (phenylalanine 80). Positions 81–109 (GHRVPIISRPVIPIELDLLMDNEDDRTMS) are excised as a propeptide. Position 115 is a sulfotyrosine (tyrosine 115). Phenylalanine 120 bears the Phenylalanine amide mark. At tyrosine 132 the chain carries Sulfotyrosine. Phenylalanine amide is present on phenylalanine 137.

The protein belongs to the gastrin/cholecystokinin family.

Its subcellular location is the secreted. Its function is as follows. Drosulfakinin-0 (DSK 0) plays diverse biological roles including regulating gut muscle contraction in adults but not in larvae. The chain is Drosulfakinins from Drosophila pseudoobscura pseudoobscura (Fruit fly).